A 340-amino-acid chain; its full sequence is UDP-glucose 4-epimerase (340 aa).

Residues 16-17 (YI), 37-42 (IDNNKN), 60-61 (DL), 82-86 (FAAKT), S127, Y154, K158, and F182 each bind NAD(+). Substrate-binding residues include S127 and Y154. The active-site Proton acceptor is the Y154. Substrate is bound by residues N183, 199–200 (TL), 216–218 (FLY), R231, and 295–298 (RSWD).

The protein belongs to the NAD(P)-dependent epimerase/dehydratase family. In terms of assembly, homodimer. The cofactor is NAD(+).

It carries out the reaction UDP-alpha-D-glucose = UDP-alpha-D-galactose. The protein operates within carbohydrate metabolism; galactose metabolism. Its function is as follows. Involved in the metabolism of galactose. Catalyzes the conversion of UDP-galactose (UDP-Gal) to UDP-glucose (UDP-Glc) through a mechanism involving the transient reduction of NAD. The protein is UDP-glucose 4-epimerase (galE) of Mycoplasma genitalium (strain ATCC 33530 / DSM 19775 / NCTC 10195 / G37) (Mycoplasmoides genitalium).